Consider the following 319-residue polypeptide: MPREDRATWKSNYFLKIIQLLDDFPKCFIVGADNVGSKQMQTIRLSLRGKAVVLMGKNTMMRKAIRGHLENNPALERLLPHIRGNVGFVFTKEDLTEVRDLLLANKVPAAARAGAIAPCEVTVPAQNTGLGPEKTSFFQALGITTKISRGTIEILSDVQLIKPGDKVGASEATLLNMLNMLNISPFSYGLIIQQVYDNGSVYSPEVLDITEDALHKRFLKGVRNIASVCLQIGYPTLASIPHTIINGYKRVLAVTVETDYTFPLAEKVKAYLADPTAFAVAAPVAAATEQKSAAPAAKEEAPKEDSEESDEDMGFGLFD.

Residues 289 to 319 (EQKSAAPAAKEEAPKEDSEESDEDMGFGLFD) form a disordered region.

It belongs to the universal ribosomal protein uL10 family. As to quaternary structure, P0 forms a pentameric complex by interaction with dimers of P1 and P2. Phosphorylated.

It localises to the nucleus. Its subcellular location is the cytoplasm. In terms of biological role, ribosomal protein P0 is the functional equivalent of E.coli protein L10. This is Large ribosomal subunit protein uL10 (rplp0) from Danio rerio (Zebrafish).